The sequence spans 392 residues: DNA replication and repair protein RecF (392 aa).

30–37 (GPNAAGKT) lines the ATP pocket.

The protein belongs to the RecF family.

It localises to the cytoplasm. In terms of biological role, the RecF protein is involved in DNA metabolism; it is required for DNA replication and normal SOS inducibility. RecF binds preferentially to single-stranded, linear DNA. It also seems to bind ATP. The polypeptide is DNA replication and repair protein RecF (Chloroflexus aurantiacus (strain ATCC 29364 / DSM 637 / Y-400-fl)).